The following is a 687-amino-acid chain: Glycine--tRNA ligase beta subunit (687 aa).

This sequence belongs to the class-II aminoacyl-tRNA synthetase family. In terms of assembly, tetramer of two alpha and two beta subunits.

The protein resides in the cytoplasm. It catalyses the reaction tRNA(Gly) + glycine + ATP = glycyl-tRNA(Gly) + AMP + diphosphate. In Neisseria meningitidis serogroup B (strain ATCC BAA-335 / MC58), this protein is Glycine--tRNA ligase beta subunit.